The sequence spans 489 residues: Cytochrome P450 2C3 (489 aa).

Residue cysteine 434 coordinates heme.

This sequence belongs to the cytochrome P450 family. Heme is required as a cofactor.

Its subcellular location is the endoplasmic reticulum membrane. It localises to the microsome membrane. The catalysed reaction is an organic molecule + reduced [NADPH--hemoprotein reductase] + O2 = an alcohol + oxidized [NADPH--hemoprotein reductase] + H2O + H(+). Functionally, cytochromes P450 are a group of heme-thiolate monooxygenases. In liver microsomes, this enzyme is involved in an NADPH-dependent electron transport pathway. It oxidizes a variety of structurally unrelated compounds, including steroids, fatty acids, and xenobiotics. This chain is Cytochrome P450 2C3 (CYP2C3), found in Oryctolagus cuniculus (Rabbit).